The primary structure comprises 813 residues: Origin of replication complex subunit 1B (813 aa).

The tract at residues 1–109 (MASTPRAKTF…TPKKKKKIDS (109 aa)) is disordered. Residues 11–21 (KSPTKTPSNIY) are compositionally biased toward polar residues. A compositionally biased stretch (low complexity) spans 27-41 (SPSSTSHTPQTPETH). Residues 43-52 (PLRRSARHVS) show a composition bias toward basic residues. Positions 83 to 90 (PRKPTTDV) match the Nuclear localization signal motif. Residues 163–187 (DPEIEDCQICFKSDTNIMIECDDCL) are histone H3 binding. The PHD-type zinc-finger motif lies at 166–215 (IEDCQICFKSDTNIMIECDDCLGGFHLKCLKPPLKEVPEGDWICQFCEVK). Zn(2+)-binding residues include Cys-169, Cys-172, Cys-183, Cys-186, His-191, and Cys-194. The interval 203-207 (PEGDW) is histone H3 binding. Zn(2+)-binding residues include Cys-209 and Cys-212. The BAH domain maps to 226 to 344 (PKPPEGKKLA…VHWRSFKRLA (119 aa)). The segment at 319 to 324 (ASNDGD) is histone H3 binding. Residues 349 to 372 (GDSDSDQEWNGRKEEEVDDSDEEM) form a disordered region. Residues 436–803 (PKSLPCRSKE…DDVAFALKDN (368 aa)) are necessary and sufficient for ORC complex assembly. Position 471-479 (471-479 (GVPGTGKTI)) interacts with ATP. Asp-561 and Glu-562 together coordinate Mg(2+). The ATP site is built by Glu-562, Asn-595, and Arg-660.

Belongs to the ORC1 family. As to quaternary structure, component of the origin recognition complex (ORC) composed of at least ORC1 (ORC1A or ORC1B), ORC2, ORC3, ORC4, ORC5 and ORC6. ORC is regulated in a cell-cycle and development dependent manner. It is sequentially assembled at the exit from anaphase of mitosis and disassembled as cells enter S phase. Interacts directly with ORC2 and ORC5. Binds mostly unmodified histone H3, and, with lower efficiency, H3K4me1 H3K4me2 and H3K4me3. Follow a cell-cycle regulation with a peak at the G1/S-phase. Mostly expressed in flower buds, and, to a lower exent, in roots, leaves and stems.

The protein resides in the nucleus. In terms of biological role, essential protein required for ovules fertilization. Component of the origin recognition complex (ORC) that binds origins of replication. It has a role in both chromosomal replication and mating type transcriptional silencing. Binds to the ARS consensus sequence (ACS) of origins of replication. H3K4me3 effector that positively regulates the transcription of a subset of genes. The sequence is that of Origin of replication complex subunit 1B from Arabidopsis thaliana (Mouse-ear cress).